Here is a 581-residue protein sequence, read N- to C-terminus: Intermediate filament protein ifa-3 (581 aa).

Residues 1–33 are disordered; the sequence is MADPDSYRSSITSRPAFNRTVTSSTQNYGTPAS. Residues 1–74 are head; that stretch reads MADPDSYRSS…RDDREREKKE (74 aa). Polar residues predominate over residues 7 to 33; sequence YRSSITSRPAFNRTVTSSTQNYGTPAS. The region spanning 71–424 is the IF rod domain; the sequence is EKKEITELND…RMLEGNSEEN (354 aa). The interval 75–106 is coil 1A; sequence ITELNDRLASYIGKVRFLAAQNRKLEADLNVL. Residues 107-120 are linker 1; sequence QSRFGKSTGSVKIM. A coil 1B region spans residues 121 to 258; that stretch reads YEMEITTATN…RGFETELKDL (138 aa). Residues 259–276 form a linker 12 region; the sequence is QAQAARDTTSENREYFKN. The coil 2 stretch occupies residues 277-424; it reads ELMNSIRDIR…RMLEGNSEEN (148 aa). The segment at 425 to 578 is tail; it reads GLRQLVEKVV…THMQRQSQQT (154 aa). The region spanning 457–574 is the LTD domain; that stretch reads SRTSYQRSAK…EERATHMQRQ (118 aa).

Belongs to the intermediate filament family. As to quaternary structure, forms some heteromeric filaments with ifb-1. In terms of tissue distribution, expressed in the embryonic and larval hypodermis. Also expressed in the ventral nerve cord of larvae.

It localises to the cytoplasm. Its function is as follows. Cytoplasmic intermediate filaments provide mechanical strength to cells. Essential protein, involved in attachment structures in epidermal cells that connect muscles to the external cuticle. Required for epidermal morphogenesis in embryos. Probable component of embryonic epidermal attachment structures. This chain is Intermediate filament protein ifa-3 (ifa-3), found in Caenorhabditis elegans.